We begin with the raw amino-acid sequence, 204 residues long: UPF0637 protein lmo1065 (204 aa).

Belongs to the UPF0637 family.

This Listeria monocytogenes serovar 1/2a (strain ATCC BAA-679 / EGD-e) protein is UPF0637 protein lmo1065.